Consider the following 248-residue polypeptide: tRNA pseudouridine synthase A (248 aa).

Aspartate 53 (nucleophile) is an active-site residue. Residue tyrosine 111 coordinates substrate.

This sequence belongs to the tRNA pseudouridine synthase TruA family. In terms of assembly, homodimer.

The enzyme catalyses uridine(38/39/40) in tRNA = pseudouridine(38/39/40) in tRNA. Formation of pseudouridine at positions 38, 39 and 40 in the anticodon stem and loop of transfer RNAs. The chain is tRNA pseudouridine synthase A from Listeria monocytogenes serotype 4a (strain HCC23).